A 145-amino-acid polypeptide reads, in one-letter code: Maximins 3/H3 type 1 (145 aa).

The first 18 residues, 1–18 (MNFKYIVAVSFLIASAYA), serve as a signal peptide directing secretion. 2 propeptides span residues 19 to 43 (RSVQNDEQSLSQRDVLEEEESLREI) and 74 to 124 (RIAE…KEKR). I144 is subject to Isoleucine amide.

The protein belongs to the bombinin family. Expressed by the skin glands.

It localises to the secreted. Functionally, maximin-3 shows antibacterial activity against both Gram-positive and Gram-negative bacteria. It also shows antimicrobial activity against the fungus C.albicans, but not against A.flavus nor P.uticale. It has little hemolytic activity. It possess a significant cytotoxicity against tumor cell lines. It possess a significant anti-HIV activity. It shows high spermicidal activity. Maximin-H3 shows antibacterial activity against both Gram-positive and Gram-negative bacteria. It also shows antimicrobial activity against the fungus C.albicans. Shows strong hemolytic activity. The sequence is that of Maximins 3/H3 type 1 from Bombina maxima (Giant fire-bellied toad).